We begin with the raw amino-acid sequence, 646 residues long: Acetyl-coenzyme A synthetase (646 aa).

CoA contacts are provided by residues 190–193 (RAGN) and T309. ATP-binding positions include 385 to 387 (GEP), 409 to 414 (DTWWQT), D498, and R513. S521 lines the CoA pocket. ATP is bound at residue R524. Positions 535, 537, and 540 each coordinate Mg(2+). R582 provides a ligand contact to CoA. Position 607 is an N6-acetyllysine (K607).

The protein belongs to the ATP-dependent AMP-binding enzyme family. It depends on Mg(2+) as a cofactor. Post-translationally, acetylated. Deacetylation by the SIR2-homolog deacetylase activates the enzyme.

The catalysed reaction is acetate + ATP + CoA = acetyl-CoA + AMP + diphosphate. In terms of biological role, catalyzes the conversion of acetate into acetyl-CoA (AcCoA), an essential intermediate at the junction of anabolic and catabolic pathways. AcsA undergoes a two-step reaction. In the first half reaction, AcsA combines acetate with ATP to form acetyl-adenylate (AcAMP) intermediate. In the second half reaction, it can then transfer the acetyl group from AcAMP to the sulfhydryl group of CoA, forming the product AcCoA. In Pseudoalteromonas translucida (strain TAC 125), this protein is Acetyl-coenzyme A synthetase.